The sequence spans 460 residues: Cation efflux system protein CusC (460 aa).

Positions 1-17 (MSPCKLLPFCVALALTG) are cleaved as a signal peptide. A lipid anchor (N-palmitoyl cysteine) is attached at cysteine 18. Cysteine 18 is lipidated: S-diacylglycerol cysteine.

The protein belongs to the outer membrane factor (OMF) (TC 1.B.17) family. Homotrimer. Component of the cus efflux system composed of CusA, CusB, CusC and CusF.

The protein localises to the cell outer membrane. Its function is as follows. Forms pores that allow passive diffusion of cations across the outer membrane. Part of a cation efflux system that mediates resistance to copper and silver. In Escherichia coli O6:H1 (strain CFT073 / ATCC 700928 / UPEC), this protein is Cation efflux system protein CusC (cusC).